Reading from the N-terminus, the 396-residue chain is Elongation factor Tu (396 aa).

The region spanning 10–206 (KPHVNVGTIG…TLDEYIPEPE (197 aa)) is the tr-type G domain. The G1 stretch occupies residues 19-26 (GHVDHGKT). 19–26 (GHVDHGKT) lines the GTP pocket. Thr-26 contributes to the Mg(2+) binding site. The interval 60–64 (GITIA) is G2. The interval 81-84 (DCPG) is G3. GTP is bound by residues 81–85 (DCPGH) and 136–139 (NKAD). The G4 stretch occupies residues 136 to 139 (NKAD). Residues 174-176 (SAL) form a G5 region.

Belongs to the TRAFAC class translation factor GTPase superfamily. Classic translation factor GTPase family. EF-Tu/EF-1A subfamily. In terms of assembly, monomer.

Its subcellular location is the cytoplasm. It carries out the reaction GTP + H2O = GDP + phosphate + H(+). Functionally, GTP hydrolase that promotes the GTP-dependent binding of aminoacyl-tRNA to the A-site of ribosomes during protein biosynthesis. This is Elongation factor Tu from Alcanivorax borkumensis (strain ATCC 700651 / DSM 11573 / NCIMB 13689 / SK2).